A 492-amino-acid polypeptide reads, in one-letter code: Trehalose-6-phosphate synthase (492 aa).

Arginine 25 serves as a coordination point for D-glucose 6-phosphate. 45–46 contributes to the UDP-alpha-D-glucose binding site; it reads GG. 2 residues coordinate D-glucose 6-phosphate: tyrosine 101 and aspartate 155. UDP-alpha-D-glucose is bound by residues arginine 297 and lysine 302. Arginine 335 is a binding site for D-glucose 6-phosphate. 400 to 404 provides a ligand contact to UDP-alpha-D-glucose; that stretch reads LVAKE.

It belongs to the glycosyltransferase 20 family. As to quaternary structure, homotetramer.

It carries out the reaction ADP-alpha-D-glucose + D-glucose 6-phosphate = alpha,alpha-trehalose 6-phosphate + ADP + H(+). The enzyme catalyses CDP-alpha-D-glucose + D-glucose 6-phosphate = alpha,alpha-trehalose 6-phosphate + CDP + H(+). It catalyses the reaction GDP-alpha-D-glucose + D-glucose 6-phosphate = alpha,alpha-trehalose 6-phosphate + GDP + H(+). The catalysed reaction is TDP-alpha-D-glucose + D-glucose 6-phosphate = 5-methyl-UDP + alpha,alpha-trehalose 6-phosphate + H(+). It carries out the reaction D-glucose 6-phosphate + UDP-alpha-D-glucose = alpha,alpha-trehalose 6-phosphate + UDP + H(+). It participates in glycan biosynthesis; trehalose biosynthesis. Probably involved in the osmoprotection via the biosynthesis of trehalose and in the production of glycogen and alpha-glucan via the TreS-Pep2 branch involved in the biosynthesis of maltose-1-phosphate (M1P). Catalyzes the transfer of glucose from UDP-glucose (UDP-Glc) to D-glucose 6-phosphate (Glc-6-P) to form trehalose-6-phosphate. Probably also able to use ADP-Glc, CDP-Glc, GDP-Glc and TDP-Glc as glucosyl donors. The polypeptide is Trehalose-6-phosphate synthase (Mycolicibacterium paratuberculosis (strain ATCC BAA-968 / K-10) (Mycobacterium paratuberculosis)).